We begin with the raw amino-acid sequence, 956 residues long: Bifunctional glutamine synthetase adenylyltransferase/adenylyl-removing enzyme (956 aa).

The interval 1–441 is adenylyl removase; the sequence is MLPLSTPLLA…IFTQLIGDDS (441 aa). Positions 450-956 are adenylyl transferase; it reads HVPFKSLWLE…RRSWQQWLGE (507 aa).

Belongs to the GlnE family. Mg(2+) serves as cofactor.

It carries out the reaction [glutamine synthetase]-O(4)-(5'-adenylyl)-L-tyrosine + phosphate = [glutamine synthetase]-L-tyrosine + ADP. The enzyme catalyses [glutamine synthetase]-L-tyrosine + ATP = [glutamine synthetase]-O(4)-(5'-adenylyl)-L-tyrosine + diphosphate. Its function is as follows. Involved in the regulation of glutamine synthetase GlnA, a key enzyme in the process to assimilate ammonia. When cellular nitrogen levels are high, the C-terminal adenylyl transferase (AT) inactivates GlnA by covalent transfer of an adenylyl group from ATP to specific tyrosine residue of GlnA, thus reducing its activity. Conversely, when nitrogen levels are low, the N-terminal adenylyl removase (AR) activates GlnA by removing the adenylyl group by phosphorolysis, increasing its activity. The regulatory region of GlnE binds the signal transduction protein PII (GlnB) which indicates the nitrogen status of the cell. This is Bifunctional glutamine synthetase adenylyltransferase/adenylyl-removing enzyme from Photorhabdus laumondii subsp. laumondii (strain DSM 15139 / CIP 105565 / TT01) (Photorhabdus luminescens subsp. laumondii).